A 176-amino-acid polypeptide reads, in one-letter code: NAD(P)H-quinone oxidoreductase subunit 6, chloroplastic (176 aa).

Transmembrane regions (helical) follow at residues 10–30 (FLLV…VFLP), 33–53 (IYSA…YILL), 61–81 (AQLL…VMFM), 92–112 (LWTV…ISLI), and 153–173 (FLPF…AIAI).

Belongs to the complex I subunit 6 family. As to quaternary structure, NDH is composed of at least 16 different subunits, 5 of which are encoded in the nucleus.

It localises to the plastid. Its subcellular location is the chloroplast thylakoid membrane. It carries out the reaction a plastoquinone + NADH + (n+1) H(+)(in) = a plastoquinol + NAD(+) + n H(+)(out). The catalysed reaction is a plastoquinone + NADPH + (n+1) H(+)(in) = a plastoquinol + NADP(+) + n H(+)(out). NDH shuttles electrons from NAD(P)H:plastoquinone, via FMN and iron-sulfur (Fe-S) centers, to quinones in the photosynthetic chain and possibly in a chloroplast respiratory chain. The immediate electron acceptor for the enzyme in this species is believed to be plastoquinone. Couples the redox reaction to proton translocation, and thus conserves the redox energy in a proton gradient. This chain is NAD(P)H-quinone oxidoreductase subunit 6, chloroplastic (ndhG), found in Jasminum nudiflorum (Winter jasmine).